Here is a 436-residue protein sequence, read N- to C-terminus: 3-ketoacyl-CoA thiolase (436 aa).

The Acyl-thioester intermediate role is filled by Cys-99. Residues His-392 and Cys-422 each act as proton acceptor in the active site.

This sequence belongs to the thiolase-like superfamily. Thiolase family. As to quaternary structure, heterotetramer of two alpha chains (FadJ) and two beta chains (FadI).

The protein localises to the cytoplasm. The enzyme catalyses an acyl-CoA + acetyl-CoA = a 3-oxoacyl-CoA + CoA. The protein operates within lipid metabolism; fatty acid beta-oxidation. Its function is as follows. Catalyzes the final step of fatty acid oxidation in which acetyl-CoA is released and the CoA ester of a fatty acid two carbons shorter is formed. This is 3-ketoacyl-CoA thiolase from Shewanella pealeana (strain ATCC 700345 / ANG-SQ1).